A 1147-amino-acid chain; its full sequence is ATP-dependent helicase/deoxyribonuclease subunit B (1147 aa).

An ATP-binding site is contributed by 8 to 15 (GRAGSGKS). Cys786, Cys1106, Cys1109, and Cys1115 together coordinate [4Fe-4S] cluster.

The protein belongs to the helicase family. AddB/RexB type 1 subfamily. Heterodimer of AddA and AddB. It depends on Mg(2+) as a cofactor. [4Fe-4S] cluster serves as cofactor.

In terms of biological role, the heterodimer acts as both an ATP-dependent DNA helicase and an ATP-dependent, dual-direction single-stranded exonuclease. Recognizes the chi site generating a DNA molecule suitable for the initiation of homologous recombination. The AddB subunit has 5' -&gt; 3' nuclease activity but not helicase activity. The polypeptide is ATP-dependent helicase/deoxyribonuclease subunit B (Clostridium botulinum (strain Loch Maree / Type A3)).